Reading from the N-terminus, the 311-residue chain is tRNA dimethylallyltransferase (311 aa).

13–20 (GPTASGKT) contributes to the ATP binding site. Residue 15–20 (TASGKT) participates in substrate binding. 2 interaction with substrate tRNA regions span residues 38–41 (DSMQ) and 166–170 (QRVLR).

It belongs to the IPP transferase family. Monomer. Requires Mg(2+) as cofactor.

The enzyme catalyses adenosine(37) in tRNA + dimethylallyl diphosphate = N(6)-dimethylallyladenosine(37) in tRNA + diphosphate. Its function is as follows. Catalyzes the transfer of a dimethylallyl group onto the adenine at position 37 in tRNAs that read codons beginning with uridine, leading to the formation of N6-(dimethylallyl)adenosine (i(6)A). The protein is tRNA dimethylallyltransferase of Staphylococcus aureus (strain Mu3 / ATCC 700698).